We begin with the raw amino-acid sequence, 99 residues long: DNA-directed RNA polymerase subunit omega (99 aa).

The disordered stretch occupies residues 55-99 (EAGTVISDPNPEEKRERLRIEREERKRQREQEQKELENRLRDEKN). The span at 65 to 99 (PEEKRERLRIEREERKRQREQEQKELENRLRDEKN) shows a compositional bias: basic and acidic residues.

The protein belongs to the RNA polymerase subunit omega family. The RNAP catalytic core consists of 2 alpha, 1 beta, 1 beta' and 1 omega subunit. When a sigma factor is associated with the core the holoenzyme is formed, which can initiate transcription.

It carries out the reaction RNA(n) + a ribonucleoside 5'-triphosphate = RNA(n+1) + diphosphate. In terms of biological role, promotes RNA polymerase assembly. Latches the N- and C-terminal regions of the beta' subunit thereby facilitating its interaction with the beta and alpha subunits. The polypeptide is DNA-directed RNA polymerase subunit omega (Enterococcus faecalis (strain ATCC 700802 / V583)).